Reading from the N-terminus, the 279-residue chain is Diaminopimelate epimerase 1 (279 aa).

The substrate site is built by Asn-13 and Asn-66. The active-site Proton donor is Cys-75. Substrate contacts are provided by residues 76-77, Asn-164, Asn-197, and 215-216; these read GN and ER. The active-site Proton acceptor is Cys-224. Position 225-226 (225-226) interacts with substrate; that stretch reads GT.

It belongs to the diaminopimelate epimerase family. As to quaternary structure, homodimer.

The protein resides in the cytoplasm. It catalyses the reaction (2S,6S)-2,6-diaminopimelate = meso-2,6-diaminopimelate. The protein operates within amino-acid biosynthesis; L-lysine biosynthesis via DAP pathway; DL-2,6-diaminopimelate from LL-2,6-diaminopimelate: step 1/1. Its function is as follows. Catalyzes the stereoinversion of LL-2,6-diaminopimelate (L,L-DAP) to meso-diaminopimelate (meso-DAP), a precursor of L-lysine and an essential component of the bacterial peptidoglycan. This chain is Diaminopimelate epimerase 1, found in Nostoc sp. (strain PCC 7120 / SAG 25.82 / UTEX 2576).